A 630-amino-acid chain; its full sequence is Protein phosphatase 2C-like domain-containing protein 1 (630 aa).

Positions 170 to 621 (GVGICEDRNS…DNITVMVIFL (452 aa)) constitute a PPM-type phosphatase domain. Positions 557 to 569 (TTHRKPCSEKVTD) are enriched in basic and acidic residues. Residues 557–578 (TTHRKPCSEKVTDRPTSVNDVA) are disordered.

Belongs to the PP2C family.

In Homo sapiens (Human), this protein is Protein phosphatase 2C-like domain-containing protein 1 (PP2D1).